The following is a 186-amino-acid chain: ATP synthase subunit delta (186 aa).

It belongs to the ATPase delta chain family. As to quaternary structure, F-type ATPases have 2 components, F(1) - the catalytic core - and F(0) - the membrane proton channel. F(1) has five subunits: alpha(3), beta(3), gamma(1), delta(1), epsilon(1). CF(0) has four main subunits: a(1), b(1), b'(1) and c(10-14). The alpha and beta chains form an alternating ring which encloses part of the gamma chain. F(1) is attached to F(0) by a central stalk formed by the gamma and epsilon chains, while a peripheral stalk is formed by the delta, b and b' chains.

The protein resides in the cell inner membrane. F(1)F(0) ATP synthase produces ATP from ADP in the presence of a proton or sodium gradient. F-type ATPases consist of two structural domains, F(1) containing the extramembraneous catalytic core and F(0) containing the membrane proton channel, linked together by a central stalk and a peripheral stalk. During catalysis, ATP synthesis in the catalytic domain of F(1) is coupled via a rotary mechanism of the central stalk subunits to proton translocation. Its function is as follows. This protein is part of the stalk that links CF(0) to CF(1). It either transmits conformational changes from CF(0) to CF(1) or is implicated in proton conduction. This Jannaschia sp. (strain CCS1) protein is ATP synthase subunit delta.